The sequence spans 421 residues: Histidine--tRNA ligase (421 aa).

Belongs to the class-II aminoacyl-tRNA synthetase family. As to quaternary structure, homodimer.

It localises to the cytoplasm. The enzyme catalyses tRNA(His) + L-histidine + ATP = L-histidyl-tRNA(His) + AMP + diphosphate + H(+). The polypeptide is Histidine--tRNA ligase (Coxiella burnetii (strain CbuK_Q154) (Coxiella burnetii (strain Q154))).